A 1877-amino-acid polypeptide reads, in one-letter code: Protein TIC 214 (1877 aa).

Helical transmembrane passes span 18–38, 67–87, 90–110, 127–147, 175–195, and 224–244; these read IINS…FSIG, FIAG…HLAL, PHTI…WNNH, LSIQ…HFIL, VGWL…LVWI, and IFSI…PSPI. Residues 249–258 show a composition bias toward basic and acidic residues; it reads FKETSETEER. The interval 249 to 308 is disordered; it reads FKETSETEERGEGEEETDVEIETTFETKGTRQEQEGSTEEDPSLFSEEKEDPDKIDEREE. Acidic residues-rich tracts occupy residues 259–271 and 284–298; these read GEGE…EIET and GSTE…EEKE. Over residues 299-308 the composition is skewed to basic and acidic residues; the sequence is DPDKIDEREE.

The protein belongs to the TIC214 family. As to quaternary structure, part of the Tic complex.

The protein localises to the plastid. Its subcellular location is the chloroplast inner membrane. Its function is as follows. Involved in protein precursor import into chloroplasts. May be part of an intermediate translocation complex acting as a protein-conducting channel at the inner envelope. The protein is Protein TIC 214 of Eucalyptus globulus subsp. globulus (Tasmanian blue gum).